The primary structure comprises 109 residues: Toxin YpjF (109 aa).

It belongs to the CbtA/YkfI/YpjF toxin family. Interacts with FtsZ but not MreB. Another group finds interaction with FtsZ and MreB.

Functionally, toxic component of a type IV toxin-antitoxin (TA) system. Acts as a dual toxin inhibitor that blocks cell division and cell elongation in genetically separable interactions with FtsZ and MreB. Overexpression results in inhibition of growth in liquid cultures. Overexpression leads to formation of lemon-shaped cells; inactivated by overexpression of cognate antitoxin YfjZ but not when the 2 genes are coexpressed from the same plasmid. Also neutralized by overexpression of non-cognate antitoxins YafW and CbeA. This chain is Toxin YpjF (ypjF), found in Escherichia coli (strain K12).